The primary structure comprises 2197 residues: Activating signal cointegrator 1 complex subunit 3 (2197 aa).

The residue at position 12 (Ser12) is a Phosphoserine. 2 coiled-coil regions span residues 18-80 and 328-356; these read KQDN…AKQI and IQSE…KAGE. Residues 487-670 form the Helicase ATP-binding 1 domain; it reads DTAYNTNENM…FLHVNPYIGL (184 aa). 500 to 507 lines the ATP pocket; it reads APTGAGKT. Lys573 carries the N6-acetyllysine modification. The short motif at 612 to 615 is the DEVH box element; it reads DEVH. In terms of domain architecture, Helicase C-terminal 1 spans 697-915; sequence QLNNMDEVCY…GTVTNVEEAV (219 aa). An SEC63 1 domain is found at 979 to 1288; that stretch reads STDLGRTASH…GAEAVCIINF (310 aa). A Helicase ATP-binding 2 domain is found at 1337 to 1512; the sequence is HTLYHTDCNV…WLNIKQMGLF (176 aa). Residue 1350 to 1357 coordinates ATP; sequence APTGSGKT. The DEIH box motif lies at 1454–1457; that stretch reads DEIH. The Helicase C-terminal 2 domain maps to 1565 to 1739; sequence RMLSSMTKLE…VLSDHLNAEI (175 aa). Positions 1812 to 2175 constitute an SEC63 2 domain; sequence PLTCGRIASY…YLGLDQQYDI (364 aa).

Belongs to the helicase family. In terms of assembly, identified in the ASCC complex that contains ASCC1, ASCC2 and ASCC3. Functions as a scaffolding subunit that interacts directly with both ASCC1 and ASCC2. Interacts directly with ALKBH3, and thereby recruits ALKBH3 to the ASCC complex. Part of the ASC-1/TRIP4 complex, that contains TRIP4, ASCC1, ASCC2 and ASCC3. Part of the RQT (ribosome quality control trigger) complex, that contains ASCC2, ASCC3 and TRIP4. Associates with ribosomes; recruited to collided ribosomes. Interacts with ZCCHC4. Interacts with ZNF598. Interacts with RPS3.

It is found in the nucleus. Its subcellular location is the nucleus speckle. The protein localises to the cytoplasm. The protein resides in the cytosol. It catalyses the reaction Couples ATP hydrolysis with the unwinding of duplex DNA by translocating in the 3'-5' direction.. It carries out the reaction ATP + H2O = ADP + phosphate + H(+). In terms of biological role, ATPase involved both in DNA repair and rescue of stalled ribosomes. 3'-5' DNA helicase involved in repair of alkylated DNA: promotes DNA unwinding to generate single-stranded substrate needed for ALKBH3, enabling ALKBH3 to process alkylated N3-methylcytosine (3mC) within double-stranded regions. Also involved in activation of the ribosome quality control (RQC) pathway, a pathway that degrades nascent peptide chains during problematic translation. Drives the splitting of stalled ribosomes that are ubiquitinated in a ZNF598-dependent manner, as part of the ribosome quality control trigger (RQT) complex. Part of the ASC-1 complex that enhances NF-kappa-B, SRF and AP1 transactivation. The sequence is that of Activating signal cointegrator 1 complex subunit 3 (Ascc3) from Rattus norvegicus (Rat).